A 785-amino-acid polypeptide reads, in one-letter code: Putative lipase C4A8.10 (785 aa).

Disordered regions lie at residues 29–99 and 115–140; these read HSAT…SSDF and NTNAINIPEQTRGVSHTSSSPSVGTS. Residues 32–41 are compositionally biased toward low complexity; that stretch reads TSSTTVPPTV. The span at 47-58 shows a compositional bias: basic and acidic residues; sequence TKKESGSIEDRA. Positions 63–86 are enriched in polar residues; the sequence is MTISSGENISKQISENNSSTNPKH. Low complexity-rich tracts occupy residues 89–99 and 127–140; these read SESSPLLSSDF and GVSHTSSSPSVGTS. Residue Ser390 is the Charge relay system of the active site.

Belongs to the putative lipase ROG1 family.

The chain is Putative lipase C4A8.10 from Schizosaccharomyces pombe (strain 972 / ATCC 24843) (Fission yeast).